The chain runs to 564 residues: Phomacin cluster regulator phmR (564 aa).

Residues 33-64 (CDRCRGHKLRCIRDQMTVDSPCQRCRKAREKC) constitute a DNA-binding region (zn(2)-C6 fungal-type). Disordered regions lie at residues 68-93 (SSTRPVPARLNRSSQGHKLPGATSSA), 152-197 (DFAD…NPFL), and 252-278 (PIHPPTMASSHRTHSTASNDSSKDSTT). 2 stretches are compositionally biased toward polar residues: residues 182–192 (ITPTSQGTTAV) and 258–278 (MASSHRTHSTASNDSSKDSTT).

It localises to the nucleus. Transcription factor that specifically regulates the expression of the gene cluster that mediates the biosynthesis of the mycotoxins phomacins, leucine-derived cytochalasans with potent actin polymerization-inhibitory activities and monocot-specific antigerminative activities. The chain is Phomacin cluster regulator phmR from Phaeosphaeria nodorum (strain SN15 / ATCC MYA-4574 / FGSC 10173) (Glume blotch fungus).